Consider the following 263-residue polypeptide: Type III pantothenate kinase (263 aa).

Asp-14 to Asn-21 contributes to the ATP binding site. Residue Gly-115–Arg-118 participates in substrate binding. The active-site Proton acceptor is Asp-117. K(+) is bound at residue Asp-137. Thr-140 lines the ATP pocket. A substrate-binding site is contributed by Thr-192.

It belongs to the type III pantothenate kinase family. In terms of assembly, homodimer. Requires NH4(+) as cofactor. It depends on K(+) as a cofactor.

The protein resides in the cytoplasm. The catalysed reaction is (R)-pantothenate + ATP = (R)-4'-phosphopantothenate + ADP + H(+). It functions in the pathway cofactor biosynthesis; coenzyme A biosynthesis; CoA from (R)-pantothenate: step 1/5. Catalyzes the phosphorylation of pantothenate (Pan), the first step in CoA biosynthesis. This Dehalococcoides mccartyi (strain ATCC BAA-2100 / JCM 16839 / KCTC 5957 / BAV1) protein is Type III pantothenate kinase.